A 366-amino-acid chain; its full sequence is Neutral protease 2 homolog MGYG_04094 (366 aa).

A signal peptide spans 1–19 (MQILAALSAIGALVATATA). Residues 20 to 188 (AAVPNAPAKQ…NKSRSTIDKR (169 aa)) constitute a propeptide that is removed on maturation. Disulfide bonds link Cys196–Cys267 and Cys274–Cys292. Residue His317 coordinates Zn(2+). Glu318 is an active-site residue. Positions 321 and 332 each coordinate Zn(2+).

The protein belongs to the peptidase M35 family. Zn(2+) serves as cofactor.

It is found in the secreted. It carries out the reaction Preferential cleavage of bonds with hydrophobic residues in P1'. Also 3-Asn-|-Gln-4 and 8-Gly-|-Ser-9 bonds in insulin B chain.. Functionally, secreted metalloproteinase that allows assimilation of proteinaceous substrates. Shows high activities on basic nuclear substrates such as histone and protamine. May be involved in virulence. This Arthroderma gypseum (strain ATCC MYA-4604 / CBS 118893) (Microsporum gypseum) protein is Neutral protease 2 homolog MGYG_04094.